A 125-amino-acid chain; its full sequence is MSLPKDLLYTEEHEWVKADEGSYVIGITDFAQDQLGDIVFVELPEVGDTVAKGDSIGSIESVKTVSDFYAPVTGKVVAVNETLEDEPELINSNPYDTGWILKLEEVEEADVKALLSSDDYEKVLD.

In terms of domain architecture, Lipoyl-binding spans 22-104 (SYVIGITDFA…YDTGWILKLE (83 aa)). Position 63 is an N6-lipoyllysine (Lys63).

It belongs to the GcvH family. The glycine cleavage system is composed of four proteins: P, T, L and H. It depends on (R)-lipoate as a cofactor.

The glycine cleavage system catalyzes the degradation of glycine. The H protein shuttles the methylamine group of glycine from the P protein to the T protein. Functionally, is also involved in protein lipoylation via its role as an octanoyl/lipoyl carrier protein intermediate. This is Glycine cleavage system H protein from Listeria monocytogenes serotype 4b (strain CLIP80459).